The primary structure comprises 558 residues: Acylase ACY 1 proenzyme (558 aa).

Catalysis depends on Thr368, which acts as the Nucleophile.

The protein belongs to the gamma-glutamyltransferase family. In terms of assembly, dimer of two non-identical chains processed from the same precursor.

The catalysed reaction is (7R)-7-(4-carboxybutanamido)cephalosporanate + H2O = (7R)-7-aminocephalosporanate + glutarate. It carries out the reaction an N-terminal (5-L-glutamyl)-[peptide] + an alpha-amino acid = 5-L-glutamyl amino acid + an N-terminal L-alpha-aminoacyl-[peptide]. It catalyses the reaction glutathione + H2O = L-cysteinylglycine + L-glutamate. The enzyme catalyses an S-substituted glutathione + H2O = an S-substituted L-cysteinylglycine + L-glutamate. Its function is as follows. Besides the cephalosporin acylase I activity which converts GL-7ACA into 7-ACA; this enzyme displays some gamma glutamyltranspeptidase activity. In Pseudomonas sp. (strain V22), this protein is Acylase ACY 1 proenzyme (acyI).